Consider the following 430-residue polypeptide: UDP-N-acetylglucosamine 1-carboxyvinyltransferase (430 aa).

Residue 22–23 (KN) coordinates phosphoenolpyruvate. Position 102 (R102) interacts with UDP-N-acetyl-alpha-D-glucosamine. C126 functions as the Proton donor in the catalytic mechanism. The residue at position 126 (C126) is a 2-(S-cysteinyl)pyruvic acid O-phosphothioketal. UDP-N-acetyl-alpha-D-glucosamine is bound by residues 131 to 135 (RPVDL), 172 to 175 (KVSV), D317, and I339.

Belongs to the EPSP synthase family. MurA subfamily.

It is found in the cytoplasm. It carries out the reaction phosphoenolpyruvate + UDP-N-acetyl-alpha-D-glucosamine = UDP-N-acetyl-3-O-(1-carboxyvinyl)-alpha-D-glucosamine + phosphate. Its pathway is cell wall biogenesis; peptidoglycan biosynthesis. Functionally, cell wall formation. Adds enolpyruvyl to UDP-N-acetylglucosamine. The chain is UDP-N-acetylglucosamine 1-carboxyvinyltransferase from Rhizobium johnstonii (strain DSM 114642 / LMG 32736 / 3841) (Rhizobium leguminosarum bv. viciae).